The following is a 199-amino-acid chain: Ribonuclease HI (199 aa).

Residues Met-1–Gly-68 are not required for RNase H activity. One can recognise an RNase H type-1 domain in the interval Arg-66–Asp-197. Residues Arg-69–Ala-199 are as active as intact RNase H. Asp-75, Glu-115, Asp-139, and Asp-189 together coordinate Mg(2+). Positions 75, 115, 139, and 189 each coordinate Mn(2+).

It belongs to the RNase H family. It depends on Mn(2+) as a cofactor. Mg(2+) is required as a cofactor. Co(2+) serves as cofactor. The cofactor is Ni(2+).

The protein resides in the cytoplasm. It catalyses the reaction Endonucleolytic cleavage to 5'-phosphomonoester.. Nuclease that specifically degrades the RNA of RNA-DNA hybrids; seems to act exonucleolytically on RNA/DNA hybrids. Endonucleolytically removes RNA primers from the Okazaki fragments of lagging strand synthesis on its own. Complements the temperature-sensitive phenotype of an E.coli double rnhA/rnhB (RNase H) disruption mutant. This is Ribonuclease HI (rnhA) from Halobacterium salinarum (strain ATCC 700922 / JCM 11081 / NRC-1) (Halobacterium halobium).